The chain runs to 381 residues: MSRPTGACPHAWRHQQQPLRGRMWAASPAFRRQLVLLRSLLPSPPAPSSVAGFPPSCPSCSSFLRVRTNHAMAASAGTVYEADAEAVVRRITPPLDRARHKGQAGKIAVIGGCREYTGAPYFAAISALKVGADLSHVFCTKDAATVIKSYSPELIVHPILEESYSVRDDERASVSSKILTEVGKWMERFDCIVVGPGLGRDSFLLDCVSNIMRHARQANIPTVVDGDGLFLVTNNLSLVEGNPLAILTPNVYEYKRLVQKVLNCDVDEETASEQLITLCQKIGDVTIMQKGKADVISDGKTVTQVSTFGSPRRCGGQGDILSGSVAVFASWARHFVLTNEQPTEKRKAASHAFEKNKRSTVTSDIIEFLGKSLEDICPAEH.

The YjeF C-terminal domain occupies 84–376 (AEAVVRRITP…EFLGKSLEDI (293 aa)). Residues G197 and 250–256 (NVYEYKR) each bind (6S)-NADPHX. Residues 290–294 (KGKAD) and 309–318 (GSPRRCGGQG) contribute to the ATP site. D319 lines the (6S)-NADPHX pocket.

It belongs to the NnrD/CARKD family. It depends on Mg(2+) as a cofactor.

It catalyses the reaction (6S)-NADHX + ATP = ADP + phosphate + NADH + H(+). The enzyme catalyses (6S)-NADPHX + ATP = ADP + phosphate + NADPH + H(+). Catalyzes the dehydration of the S-form of NAD(P)HX at the expense of ATP, which is converted to ADP. Together with NAD(P)HX epimerase, which catalyzes the epimerization of the S- and R-forms, the enzyme allows the repair of both epimers of NAD(P)HX, a damaged form of NAD(P)H that is a result of enzymatic or heat-dependent hydration. The sequence is that of ATP-dependent (S)-NAD(P)H-hydrate dehydratase from Sorghum bicolor (Sorghum).